The following is a 459-amino-acid chain: Ribosomal protein uS12 methylthiotransferase RimO (459 aa).

Residues 11 to 126 (PKVGMVSLGC…VMQAVHSHLP (116 aa)) form the MTTase N-terminal domain. [4Fe-4S] cluster contacts are provided by Cys-20, Cys-56, Cys-85, Cys-157, Cys-161, and Cys-164. A Radical SAM core domain is found at 143–388 (LTPRHYAYLK…MEVAEEVSAA (246 aa)). Residues 391–459 (ARKVGKTLKV…ADGHDLWGEV (69 aa)) form the TRAM domain.

This sequence belongs to the methylthiotransferase family. RimO subfamily. The cofactor is [4Fe-4S] cluster.

It is found in the cytoplasm. It catalyses the reaction L-aspartate(89)-[ribosomal protein uS12]-hydrogen + (sulfur carrier)-SH + AH2 + 2 S-adenosyl-L-methionine = 3-methylsulfanyl-L-aspartate(89)-[ribosomal protein uS12]-hydrogen + (sulfur carrier)-H + 5'-deoxyadenosine + L-methionine + A + S-adenosyl-L-homocysteine + 2 H(+). Functionally, catalyzes the methylthiolation of an aspartic acid residue of ribosomal protein uS12. This chain is Ribosomal protein uS12 methylthiotransferase RimO, found in Burkholderia pseudomallei (strain K96243).